A 573-amino-acid polypeptide reads, in one-letter code: Sulfate adenylyltransferase (573 aa).

Residues 1–169 (MSNPPHGGVL…LEAVNKLQHY (169 aa)) form an N-terminal region. The tract at residues 170–394 (DFVDLRYSPA…LRESHPPRSQ (225 aa)) is catalytic. Position 197 (Q197) interacts with sulfate. Residues 197 to 200 (QTRN) and 291 to 294 (GRDH) each bind ATP. Catalysis depends on residues T198, R199, and N200. Residue R199 coordinates sulfate. A295 is a sulfate binding site. M333 is an ATP binding site. Positions 395 to 573 (QGFTVLFTGY…LESQGLLDRF (179 aa)) are allosteric regulation domain; adenylyl-sulfate kinase-like. 3'-phosphoadenylyl sulfate-binding positions include 434 to 437 (ENIR), R451, 477 to 478 (IA), and R515.

This sequence in the N-terminal section; belongs to the sulfate adenylyltransferase family. In the C-terminal section; belongs to the APS kinase family. Homohexamer. Dimer of trimers.

The protein resides in the cytoplasm. The catalysed reaction is sulfate + ATP + H(+) = adenosine 5'-phosphosulfate + diphosphate. It participates in sulfur metabolism; hydrogen sulfide biosynthesis; sulfite from sulfate: step 1/3. With respect to regulation, allosterically inhibited by 3'-phosphoadenosine 5'-phosphosulfate (PAPS). Its function is as follows. Catalyzes the first intracellular reaction of sulfate assimilation, forming adenosine-5'-phosphosulfate (APS) from inorganic sulfate and ATP. Plays an important role in sulfate activation as a component of the biosynthesis pathway of sulfur-containing amino acids. The polypeptide is Sulfate adenylyltransferase (cys-11) (Neurospora crassa (strain ATCC 24698 / 74-OR23-1A / CBS 708.71 / DSM 1257 / FGSC 987)).